A 289-amino-acid chain; its full sequence is DDRGK domain-containing protein 1 (289 aa).

The Lumenal segment spans residues Met-1–Asp-2. Residues Pro-3–Leu-23 traverse the membrane as a helical segment. At Arg-24–Pro-289 the chain is on the cytoplasmic side. Residues Arg-65–Glu-168 form a disordered region. The segment covering Leu-70 to Pro-85 has biased composition (acidic residues). Residues Ile-87–Gln-166 show a composition bias toward basic and acidic residues.

The protein belongs to the DDRGK1 family. As to quaternary structure, interacts with Atg9; the interaction is transient.

It localises to the endoplasmic reticulum membrane. Substrate adapter for ufmylation, the covalent attachment of the ubiquitin-like modifier UFM1 to substrate proteins. Required for ufmylation of Atg9; protects the nervous system during aging, possibly by stabilizing Atg9 and supporting its function. The polypeptide is DDRGK domain-containing protein 1 (Bombyx mori (Silk moth)).